The following is a 509-amino-acid chain: Zinc finger CCCH-type with G patch domain-containing protein (509 aa).

The C3H1-type zinc finger occupies Pro155 to Leu178. Positions Glu254–Asp277 are disordered. A G-patch domain is found at Thr310–Glu356. The disordered stretch occupies residues Leu407–Gln430. A compositionally biased stretch (basic and acidic residues) spans Glu411–Ala420.

It is found in the nucleus. Transcription repressor. The sequence is that of Zinc finger CCCH-type with G patch domain-containing protein from Drosophila pseudoobscura pseudoobscura (Fruit fly).